The following is a 617-amino-acid chain: Dihydroxy-acid dehydratase (617 aa).

A Mg(2+)-binding site is contributed by D81. C122 is a [2Fe-2S] cluster binding site. Mg(2+)-binding residues include D123 and K124. N6-carboxylysine is present on K124. C197 is a binding site for [2Fe-2S] cluster. E493 serves as a coordination point for Mg(2+). The active-site Proton acceptor is the S519.

Belongs to the IlvD/Edd family. Homodimer. It depends on [2Fe-2S] cluster as a cofactor. Requires Mg(2+) as cofactor.

The enzyme catalyses (2R)-2,3-dihydroxy-3-methylbutanoate = 3-methyl-2-oxobutanoate + H2O. It catalyses the reaction (2R,3R)-2,3-dihydroxy-3-methylpentanoate = (S)-3-methyl-2-oxopentanoate + H2O. The protein operates within amino-acid biosynthesis; L-isoleucine biosynthesis; L-isoleucine from 2-oxobutanoate: step 3/4. It functions in the pathway amino-acid biosynthesis; L-valine biosynthesis; L-valine from pyruvate: step 3/4. Functionally, functions in the biosynthesis of branched-chain amino acids. Catalyzes the dehydration of (2R,3R)-2,3-dihydroxy-3-methylpentanoate (2,3-dihydroxy-3-methylvalerate) into 2-oxo-3-methylpentanoate (2-oxo-3-methylvalerate) and of (2R)-2,3-dihydroxy-3-methylbutanoate (2,3-dihydroxyisovalerate) into 2-oxo-3-methylbutanoate (2-oxoisovalerate), the penultimate precursor to L-isoleucine and L-valine, respectively. In Corynebacterium aurimucosum (strain ATCC 700975 / DSM 44827 / CIP 107346 / CN-1) (Corynebacterium nigricans), this protein is Dihydroxy-acid dehydratase.